A 302-amino-acid polypeptide reads, in one-letter code: Monopolin complex subunit MAM1 (302 aa).

2 disordered regions span residues 53 to 83 and 257 to 276; these read YHKEHSVKPKQNSGNVAAKEDKDTQHLQNNV and TSENPFSSSPNTKKIKSKGK. A compositionally biased stretch (polar residues) spans 257–268; it reads TSENPFSSSPNT.

Component of the monopolin complex composed of at least CSM1, LRS4 and MAM1. The complex associates with the kinetochore during late pachytene. In terms of processing, phosphorylated by CDC5. This phosphorylation is required for the location to the kinetochores during late pachytene.

The protein resides in the nucleus. Functionally, component of the monopolin complex which promotes monoorientation during meiosis I, required for chromosome segregation during meiosis. In Saccharomyces cerevisiae (strain ATCC 204508 / S288c) (Baker's yeast), this protein is Monopolin complex subunit MAM1 (MAM1).